Consider the following 244-residue polypeptide: Cell division protein DivIB (244 aa).

At 1 to 6 (MKIKWP) the chain is on the cytoplasmic side. A helical membrane pass occupies residues 7–27 (LQLWISLAVFVTIAVGTLLLL). Residues 28–104 (QPWQTIKTVT…IDIAEKVTAG (77 aa)) form the POTRA domain. The Extracellular segment spans residues 28-244 (QPWQTIKTVT…KADNKAHQKQ (217 aa)).

This sequence belongs to the FtsQ/DivIB family. DivIB subfamily.

It is found in the cell membrane. Its function is as follows. Cell division protein that may be involved in stabilizing or promoting the assembly of the division complex. The chain is Cell division protein DivIB from Leuconostoc kimchii (strain IMSNU 11154 / KCTC 2386 / IH25).